Reading from the N-terminus, the 181-residue chain is Peptidyl-tRNA hydrolase (181 aa).

Tyrosine 14 contacts tRNA. Residue histidine 19 is the Proton acceptor of the active site. Phenylalanine 60, asparagine 62, and asparagine 106 together coordinate tRNA.

Belongs to the PTH family. Monomer.

The protein localises to the cytoplasm. The enzyme catalyses an N-acyl-L-alpha-aminoacyl-tRNA + H2O = an N-acyl-L-amino acid + a tRNA + H(+). Functionally, hydrolyzes ribosome-free peptidyl-tRNAs (with 1 or more amino acids incorporated), which drop off the ribosome during protein synthesis, or as a result of ribosome stalling. Catalyzes the release of premature peptidyl moieties from peptidyl-tRNA molecules trapped in stalled 50S ribosomal subunits, and thus maintains levels of free tRNAs and 50S ribosomes. The polypeptide is Peptidyl-tRNA hydrolase (Campylobacter curvus (strain 525.92)).